Consider the following 316-residue polypeptide: Transaldolase (316 aa).

Catalysis depends on Lys131, which acts as the Schiff-base intermediate with substrate.

It belongs to the transaldolase family. Type 1 subfamily. In terms of assembly, homodimer.

Its subcellular location is the cytoplasm. The enzyme catalyses D-sedoheptulose 7-phosphate + D-glyceraldehyde 3-phosphate = D-erythrose 4-phosphate + beta-D-fructose 6-phosphate. The protein operates within carbohydrate degradation; pentose phosphate pathway; D-glyceraldehyde 3-phosphate and beta-D-fructose 6-phosphate from D-ribose 5-phosphate and D-xylulose 5-phosphate (non-oxidative stage): step 2/3. Transaldolase is important for the balance of metabolites in the pentose-phosphate pathway. This chain is Transaldolase, found in Glaesserella parasuis serovar 5 (strain SH0165) (Haemophilus parasuis).